We begin with the raw amino-acid sequence, 256 residues long: Thiazole synthase (256 aa).

Lys-96 (schiff-base intermediate with DXP) is an active-site residue. 1-deoxy-D-xylulose 5-phosphate is bound by residues Gly-157, 184-185 (AG), and 206-207 (NT).

Belongs to the ThiG family. As to quaternary structure, homotetramer. Forms heterodimers with either ThiH or ThiS.

The protein resides in the cytoplasm. The catalysed reaction is [ThiS sulfur-carrier protein]-C-terminal-Gly-aminoethanethioate + 2-iminoacetate + 1-deoxy-D-xylulose 5-phosphate = [ThiS sulfur-carrier protein]-C-terminal Gly-Gly + 2-[(2R,5Z)-2-carboxy-4-methylthiazol-5(2H)-ylidene]ethyl phosphate + 2 H2O + H(+). It participates in cofactor biosynthesis; thiamine diphosphate biosynthesis. Its function is as follows. Catalyzes the rearrangement of 1-deoxy-D-xylulose 5-phosphate (DXP) to produce the thiazole phosphate moiety of thiamine. Sulfur is provided by the thiocarboxylate moiety of the carrier protein ThiS. In vitro, sulfur can be provided by H(2)S. This Brucella suis (strain ATCC 23445 / NCTC 10510) protein is Thiazole synthase.